Consider the following 183-residue polypeptide: Probable apo-citrate lyase phosphoribosyl-dephospho-CoA transferase (183 aa).

This sequence belongs to the CitX family.

The enzyme catalyses apo-[citrate lyase ACP] + 2'-(5''-triphospho-alpha-D-ribosyl)-3'-dephospho-CoA = holo-[citrate lyase ACP] + diphosphate. Functionally, transfers 2-(5''-triphosphoribosyl)-3'-dephosphocoenzyme-A on a serine residue to the apo-acyl carrier protein (gamma chain) of the citrate lyase to yield holo-acyl carrier protein. This is Probable apo-citrate lyase phosphoribosyl-dephospho-CoA transferase from Escherichia coli (strain 55989 / EAEC).